The chain runs to 49 residues: Large ribosomal subunit protein bL33 (49 aa).

This sequence belongs to the bacterial ribosomal protein bL33 family.

The sequence is that of Large ribosomal subunit protein bL33 from Lactiplantibacillus plantarum (strain ATCC BAA-793 / NCIMB 8826 / WCFS1) (Lactobacillus plantarum).